A 391-amino-acid polypeptide reads, in one-letter code: Erythronate-4-phosphate dehydrogenase (391 aa).

Residues serine 45 and threonine 67 each coordinate substrate. Aspartate 147 and threonine 176 together coordinate NAD(+). Arginine 209 is a catalytic residue. Residue aspartate 238 participates in NAD(+) binding. Glutamate 243 is an active-site residue. Histidine 260 acts as the Proton donor in catalysis. Glycine 263 provides a ligand contact to NAD(+). Tyrosine 264 contacts substrate.

Belongs to the D-isomer specific 2-hydroxyacid dehydrogenase family. PdxB subfamily. As to quaternary structure, homodimer.

It localises to the cytoplasm. The enzyme catalyses 4-phospho-D-erythronate + NAD(+) = (R)-3-hydroxy-2-oxo-4-phosphooxybutanoate + NADH + H(+). It participates in cofactor biosynthesis; pyridoxine 5'-phosphate biosynthesis; pyridoxine 5'-phosphate from D-erythrose 4-phosphate: step 2/5. Functionally, catalyzes the oxidation of erythronate-4-phosphate to 3-hydroxy-2-oxo-4-phosphonooxybutanoate. This is Erythronate-4-phosphate dehydrogenase from Photobacterium profundum (strain SS9).